Here is a 154-residue protein sequence, read N- to C-terminus: Nuclear cap-binding protein subunit 2 (154 aa).

Residues tyrosine 10, tyrosine 33, 102–106 (RCDWD), 113–117 (RQYGR), and 123–124 (QV) contribute to the mRNA site. The 79-residue stretch at 30–108 (STLYMGNLSF…RIIRCDWDAG (79 aa)) folds into the RRM domain.

Belongs to the RRM NCBP2 family. In terms of assembly, component of the nuclear cap-binding complex (CBC), a heterodimer composed of Cbp80 and Cbp20 that interacts with m7GpppG-capped RNA.

Its subcellular location is the nucleus. In terms of biological role, component of the cap-binding complex (CBC), which binds co-transcriptionally to the 5' cap of pre-mRNAs and is involved in various processes such as pre-mRNA splicing and RNA-mediated gene silencing (RNAi). The CBC complex is involved in miRNA-mediated RNA interference and is required for primary microRNAs (miRNAs) processing. Also involved in innate immunity via the short interfering RNAs (siRNAs) processing machinery by restricting the viral RNA production. In the CBC complex, Cbp20 recognizes and binds capped RNAs (m7GpppG-capped RNA) but requires Cbp80 to stabilize the movement of its N-terminal loop and lock the CBC into a high affinity cap-binding state with the cap structure. This Bombyx mori (Silk moth) protein is Nuclear cap-binding protein subunit 2.